Consider the following 2344-residue polypeptide: Peroxide stress-activated histidine kinase mak3 (2344 aa).

The 295-residue stretch at 1–295 folds into the Protein kinase domain; sequence MYSQHELRNK…GIVNDLEACL (295 aa). A phosphoserine mark is found at serine 12, serine 16, and serine 17. The span at 486-503 shows a compositional bias: polar residues; that stretch reads SGNTRKTSLLGSNHSSYS. The disordered stretch occupies residues 486–506; sequence SGNTRKTSLLGSNHSSYSDKL. TPR repeat units lie at residues 829-862 and 1340-1373; these read CHYL…IPHE and AFAF…YAAL. The PAC domain occupies 1730-1781; that stretch reads FELEIRIKRKDGVYRWNLTRCTPTTNEKNRTSFLCATIDIDDQKKARATALE. The region spanning 1792 to 2018 is the Histidine kinase domain; it reads NISHELRTPF…TFKICYDLKI (227 aa). Histidine 1795 carries the phosphohistidine; by autocatalysis modification. Residues 2211-2333 enclose the Response regulatory domain; sequence KILIAEDNPI…TLIKMLLQYL (123 aa). Aspartate 2263 is subject to 4-aspartylphosphate.

It localises to the cytoplasm. The catalysed reaction is ATP + protein L-histidine = ADP + protein N-phospho-L-histidine.. In terms of biological role, involved in the control of the SAPK-dependent transcriptional response to peroxide stress. Regulates sty1 activity. The protein is Peroxide stress-activated histidine kinase mak3 (mak3) of Schizosaccharomyces pombe (strain 972 / ATCC 24843) (Fission yeast).